A 441-amino-acid polypeptide reads, in one-letter code: Actin-related protein 4 (441 aa).

Positions 48 to 73 (VDVDSTKTNSNSEDSKTESEKEKSKR) are disordered. A compositionally biased stretch (basic and acidic residues) spans 60 to 70 (EDSKTESEKEK).

This sequence belongs to the actin family. ARP4 subfamily. Component of the SWR1 chromatin-remodeling complex and of the NuA4 histone acetyltransferase complex. Interacts with the SWI/SNF complex. Interacts with EAF1A and EAF1B. As to expression, mostly expressed in flowers, and, to a lower extent, in roots, seedlings, leaves and siliques (at protein level).

The protein localises to the nucleus. Its subcellular location is the cytoplasm. Functionally, involved in several developmental processes including organization of plant organs, flowering time, anther development, flower senescence and fertility, probably by regulating the chromatin structure. The polypeptide is Actin-related protein 4 (Arabidopsis thaliana (Mouse-ear cress)).